The chain runs to 201 residues: Probable molybdenum cofactor guanylyltransferase (201 aa).

GTP-binding positions include 6-8, Lys18, Asp65, and Asp97; that span reads LAG. Residue Asp97 coordinates Mg(2+).

It belongs to the MobA family. Mg(2+) serves as cofactor.

It is found in the cytoplasm. It catalyses the reaction Mo-molybdopterin + GTP + H(+) = Mo-molybdopterin guanine dinucleotide + diphosphate. Functionally, transfers a GMP moiety from GTP to Mo-molybdopterin (Mo-MPT) cofactor (Moco or molybdenum cofactor) to form Mo-molybdopterin guanine dinucleotide (Mo-MGD) cofactor. The chain is Probable molybdenum cofactor guanylyltransferase from Staphylococcus haemolyticus (strain JCSC1435).